The sequence spans 162 residues: Disulfide bond formation protein B (162 aa).

Residues 1–8 (MTPLFRKA) are Cytoplasmic-facing. The chain crosses the membrane as a helical span at residues 9–25 (VWLLFAVSVCAFAGSLA). The Periplasmic portion of the chain corresponds to 26–43 (AQYVLGMEPCVLCISQRL). C35 and C38 are oxidised to a cystine. Residues 44–60 (CVLATALCTAIVLMCRP) form a helical membrane-spanning segment. Over 61–67 (RRRAGGL) the chain is Cytoplasmic. The chain crosses the membrane as a helical span at residues 68-85 (FGAVFISIPAVTGISVAA). Residues 86-141 (YQLWLQSLPPGTAPSCGAPWTFRLKGWPLFDWFEPVVRGFGNCAEPDYLLGIALPV) lie on the Periplasmic side of the membrane. A disulfide bridge connects residues C101 and C128. The helical transmembrane segment at 142 to 160 (WSVAYFLAVVLTVWWAWAR) threads the bilayer. Over 161–162 (AK) the chain is Cytoplasmic.

Belongs to the DsbB family.

The protein localises to the cell inner membrane. In terms of biological role, required for disulfide bond formation in some periplasmic proteins. Acts by oxidizing the DsbA protein. In Neisseria meningitidis serogroup B (strain ATCC BAA-335 / MC58), this protein is Disulfide bond formation protein B.